The primary structure comprises 916 residues: Protein translocase subunit SecA (916 aa).

Residues glutamine 87, 105 to 109, and aspartate 507 contribute to the ATP site; that span reads GEGKT. Zn(2+)-binding residues include cysteine 900, cysteine 902, cysteine 911, and histidine 912.

It belongs to the SecA family. As to quaternary structure, monomer and homodimer. Part of the essential Sec protein translocation apparatus which comprises SecA, SecYEG and auxiliary proteins SecDF-YajC and YidC. It depends on Zn(2+) as a cofactor.

The protein localises to the cell inner membrane. It is found in the cytoplasm. The catalysed reaction is ATP + H2O + cellular proteinSide 1 = ADP + phosphate + cellular proteinSide 2.. In terms of biological role, part of the Sec protein translocase complex. Interacts with the SecYEG preprotein conducting channel. Has a central role in coupling the hydrolysis of ATP to the transfer of proteins into and across the cell membrane, serving both as a receptor for the preprotein-SecB complex and as an ATP-driven molecular motor driving the stepwise translocation of polypeptide chains across the membrane. In Neisseria meningitidis serogroup C (strain 053442), this protein is Protein translocase subunit SecA.